Here is a 414-residue protein sequence, read N- to C-terminus: Putative competence-damage inducible protein (414 aa).

The protein belongs to the CinA family.

The polypeptide is Putative competence-damage inducible protein (Geobacillus kaustophilus (strain HTA426)).